The chain runs to 375 residues: DNA replication and repair protein RecF (375 aa).

Position 30-37 (30-37 (GENAQGKT)) interacts with ATP.

It belongs to the RecF family.

It is found in the cytoplasm. In terms of biological role, the RecF protein is involved in DNA metabolism; it is required for DNA replication and normal SOS inducibility. RecF binds preferentially to single-stranded, linear DNA. It also seems to bind ATP. The protein is DNA replication and repair protein RecF of Bacillus cereus (strain ZK / E33L).